Reading from the N-terminus, the 236-residue chain is Purine nucleoside phosphorylase DeoD-type (236 aa).

H5 is a binding site for a purine D-ribonucleoside. Residues G21, R25, R44, and 88–91 contribute to the phosphate site; that span reads RIGS. A purine D-ribonucleoside-binding positions include 180-182 and 204-205; these read EME and SD. Residue D205 is the Proton donor of the active site.

Belongs to the PNP/UDP phosphorylase family. In terms of assembly, homohexamer; trimer of homodimers.

The enzyme catalyses a purine D-ribonucleoside + phosphate = a purine nucleobase + alpha-D-ribose 1-phosphate. It carries out the reaction a purine 2'-deoxy-D-ribonucleoside + phosphate = a purine nucleobase + 2-deoxy-alpha-D-ribose 1-phosphate. Its function is as follows. Catalyzes the reversible phosphorolytic breakdown of the N-glycosidic bond in the beta-(deoxy)ribonucleoside molecules, with the formation of the corresponding free purine bases and pentose-1-phosphate. The chain is Purine nucleoside phosphorylase DeoD-type from Hahella chejuensis (strain KCTC 2396).